A 178-amino-acid polypeptide reads, in one-letter code: Transcription antitermination protein NusB (178 aa).

Belongs to the NusB family.

Its function is as follows. Involved in transcription antitermination. Required for transcription of ribosomal RNA (rRNA) genes. Binds specifically to the boxA antiterminator sequence of the ribosomal RNA (rrn) operons. This is Transcription antitermination protein NusB from Alkalilimnicola ehrlichii (strain ATCC BAA-1101 / DSM 17681 / MLHE-1).